We begin with the raw amino-acid sequence, 739 residues long: MEYHHRPHSPPPSDDDVVVIQMNAAAIAAVDEWSSTNEVDDAAAGKGGGLTRRTFSQAYKMKHRTPLEFTWRQVALLSFQSLGVVYGDLGTSPLYVFSSISLDDPGEADFVGILSIILWTFTMICLVKYVFIVLKADDHGEGGTFALYSLLRQHVNFKGNMPVPVTHLASDINLKFHSKKRILTSKLLKFLEQSTKWQAVITYIVLAGTCMVLGDGALTPAISVLSAVQGIQSRSSSITQAHVVLLSVIILFILFFFQKHGTSKVSFTFSPIMILWFTFVAFIGLYNIIKHYPPILKAVSPHYIIIYFIRNKRAAWETLGAIVLCITGAEAMFADLGHFNKSSIQMAFSVIVYPSMILAYAGQAAFLVKNPSKLSTTFYSSTPEPLFWPMFIIATLAAIVASQALISASFSIIRQSIALGCFPRVTMKHTSGKHEGQVYSPEINYFLMVACILITVGFKGGPEIGQAFGVAVIFVMLFTTNLMTVVMLIIWESNIALASLFFVFFFSIEGIYMTSLMNKILQGGWVPFAITAFFLIITLSWTYGRSKKGEYELANVMEREEFIKTVTTRSRVPGVCIFCTDMMNGIPPIVRHYVQHVASLRELMVFVTIRVLPVRTVLPEERFIIDKLEPVGVYRCIVQYGYMDNHNMEGDDYVASVIASLKEIAENDDEILVLDSALINGSTFVLGRTIIKMGTRHNCLKRFFINNLYRFLQKNFRSNMSSLKINPGKTLQVGMLYEI.

Residues 1 to 81 (MEYHHRPHSP…RQVALLSFQS (81 aa)) are Cytoplasmic-facing. The helical transmembrane segment at 82 to 102 (LGVVYGDLGTSPLYVFSSISL) threads the bilayer. The Extracellular portion of the chain corresponds to 103–112 (DDPGEADFVG). A helical membrane pass occupies residues 113–133 (ILSIILWTFTMICLVKYVFIV). Topologically, residues 134–198 (LKADDHGEGG…KFLEQSTKWQ (65 aa)) are cytoplasmic. Residues 199 to 219 (AVITYIVLAGTCMVLGDGALT) traverse the membrane as a helical segment. Residues 220–236 (PAISVLSAVQGIQSRSS) are Extracellular-facing. Residues 237–257 (SITQAHVVLLSVIILFILFFF) traverse the membrane as a helical segment. The Cytoplasmic segment spans residues 258-268 (QKHGTSKVSFT). Residues 269–289 (FSPIMILWFTFVAFIGLYNII) form a helical membrane-spanning segment. Residues 290–318 (KHYPPILKAVSPHYIIIYFIRNKRAAWET) lie on the Extracellular side of the membrane. The helical transmembrane segment at 319 to 339 (LGAIVLCITGAEAMFADLGHF) threads the bilayer. The Cytoplasmic portion of the chain corresponds to 340-347 (NKSSIQMA). A helical membrane pass occupies residues 348–368 (FSVIVYPSMILAYAGQAAFLV). The Extracellular segment spans residues 369–385 (KNPSKLSTTFYSSTPEP). Residues 386 to 406 (LFWPMFIIATLAAIVASQALI) form a helical membrane-spanning segment. Over 407-437 (SASFSIIRQSIALGCFPRVTMKHTSGKHEGQ) the chain is Cytoplasmic. A helical membrane pass occupies residues 438-458 (VYSPEINYFLMVACILITVGF). Over 459–469 (KGGPEIGQAFG) the chain is Extracellular. The chain crosses the membrane as a helical span at residues 470–490 (VAVIFVMLFTTNLMTVVMLII). The Cytoplasmic portion of the chain corresponds to 491 to 494 (WESN). The chain crosses the membrane as a helical span at residues 495-515 (IALASLFFVFFFSIEGIYMTS). The Extracellular portion of the chain corresponds to 516-519 (LMNK). Residues 520 to 540 (ILQGGWVPFAITAFFLIITLS) form a helical membrane-spanning segment. The Cytoplasmic segment spans residues 541-739 (WTYGRSKKGE…TLQVGMLYEI (199 aa)).

It belongs to the HAK/KUP transporter (TC 2.A.72.3) family.

It localises to the membrane. Its function is as follows. High-affinity potassium transporter. This chain is Potassium transporter 26 (HAK26), found in Oryza sativa subsp. japonica (Rice).